The sequence spans 285 residues: Aquaporin PIP2-5 (285 aa).

The next 2 membrane-spanning stretches (helical) occupy residues A38 to I58 and C75 to V95. Residues N107–A109 carry the NPA 1 motif. The next 3 membrane-spanning stretches (helical) occupy residues L126 to F146, G168 to A188, and V202 to I222. An NPA 2 motif is present at residues N228–A230. The chain crosses the membrane as a helical span at residues I250 to L270.

Belongs to the MIP/aquaporin (TC 1.A.8) family. PIP (TC 1.A.8.11) subfamily. As to quaternary structure, homomers. May interact with PIP1-2 to form heteromers. As to expression, specifically expressed in roots, in the exodermis, endodermis and xylem parenchyma. Polar localization to the external periclinal side of epidermal cells in root apices.

It is found in the cell membrane. In terms of biological role, water channel required to facilitate the transport of water across cell membrane. Its function is impaired by Hg(2+). May play a role in water uptake from the root surface. Active as homomers. Increased activity when heteromerization with PIP1-2. In Zea mays (Maize), this protein is Aquaporin PIP2-5 (PIP2-5).